Here is a 206-residue protein sequence, read N- to C-terminus: Outer-membrane lipoprotein carrier protein (206 aa).

Residues 1 to 21 form the signal peptide; it reads MKKLLCAVLLSPLLYSNAVLA.

It belongs to the LolA family. Monomer.

It is found in the periplasm. Functionally, participates in the translocation of lipoproteins from the inner membrane to the outer membrane. Only forms a complex with a lipoprotein if the residue after the N-terminal Cys is not an aspartate (The Asp acts as a targeting signal to indicate that the lipoprotein should stay in the inner membrane). This is Outer-membrane lipoprotein carrier protein from Shewanella sp. (strain ANA-3).